Reading from the N-terminus, the 268-residue chain is Hydroxyethylthiazole kinase (268 aa).

M44 serves as a coordination point for substrate. The ATP site is built by R119 and S165. G192 contacts substrate.

Belongs to the Thz kinase family. The cofactor is Mg(2+).

The catalysed reaction is 5-(2-hydroxyethyl)-4-methylthiazole + ATP = 4-methyl-5-(2-phosphooxyethyl)-thiazole + ADP + H(+). It functions in the pathway cofactor biosynthesis; thiamine diphosphate biosynthesis; 4-methyl-5-(2-phosphoethyl)-thiazole from 5-(2-hydroxyethyl)-4-methylthiazole: step 1/1. Its function is as follows. Catalyzes the phosphorylation of the hydroxyl group of 4-methyl-5-beta-hydroxyethylthiazole (THZ). This chain is Hydroxyethylthiazole kinase, found in Corynebacterium glutamicum (strain R).